The sequence spans 709 residues: Polyribonucleotide nucleotidyltransferase (709 aa).

Aspartate 485 and aspartate 491 together coordinate Mg(2+). The region spanning 552–611 (PRIYTMKIDPKKIKDVIGKGGATIRSLTEETGTSIDIDDDGTVKIAAVDSNAAKNVMGRI) is the KH domain. Residues 621-689 (GAIYKGKVTR…RQGRIRLTMK (69 aa)) form the S1 motif domain.

Belongs to the polyribonucleotide nucleotidyltransferase family. Component of the RNA degradosome, which is a multiprotein complex involved in RNA processing and mRNA degradation. Mg(2+) serves as cofactor.

Its subcellular location is the cytoplasm. It carries out the reaction RNA(n+1) + phosphate = RNA(n) + a ribonucleoside 5'-diphosphate. In terms of biological role, involved in mRNA degradation. Catalyzes the phosphorolysis of single-stranded polyribonucleotides processively in the 3'- to 5'-direction. This chain is Polyribonucleotide nucleotidyltransferase, found in Haemophilus influenzae (strain 86-028NP).